Reading from the N-terminus, the 286-residue chain is MKNILSIQSHVVFGHAGNSAAEFPMRRMGVNVWPLNTVQFSNHTQYGHWTGCVMPASHLTDIVQGIADIDRLKDCDAVLSGYIGSPEQGSHILAAVAQVKQANPDAWYFCDPVMGHPEKGCIVAPGVAEFFCNEALPASDMIAPNLLELEQLSGERVENVEQAVQVARSLCARGPKVVLVKHLSRAGYHADCFEMLLVTADDAWHICRPLVDFGKRQPVGVGDLTSGLLLVNLLKGEPLDKALEHVTAAVYEVMLKTQEMGEYELQVVAAQETIVTPICQFTAVRL.

Substrate-binding positions include S9 and T44–Q45. ATP contacts are provided by residues D111, A143, E148, K181, and R208–V211. D223 is a substrate binding site.

This sequence belongs to the pyridoxine kinase family. PdxY subfamily. As to quaternary structure, homodimer. Mg(2+) is required as a cofactor.

The enzyme catalyses pyridoxal + ATP = pyridoxal 5'-phosphate + ADP + H(+). It participates in cofactor metabolism; pyridoxal 5'-phosphate salvage; pyridoxal 5'-phosphate from pyridoxal: step 1/1. Pyridoxal kinase involved in the salvage pathway of pyridoxal 5'-phosphate (PLP). Catalyzes the phosphorylation of pyridoxal to PLP. In Yersinia pestis bv. Antiqua (strain Antiqua), this protein is Pyridoxal kinase PdxY.